A 519-amino-acid chain; its full sequence is F-box only protein 31-A (519 aa).

The segment at 11–37 (GQSGGCRRRQQRKGAGNDPELEDEEEE) is disordered. Residues 54–100 (PHSLLLLPPEILVEIFSLLPGTELGGLAQVCSKFRQILTTDTIWKRR) enclose the F-box domain. Residues Cys196, His204, Cys220, and His226 each coordinate Zn(2+). Over residues 369 to 390 (REQRQTDNEEDDGRGAGPDKAE) the composition is skewed to basic and acidic residues. Residues 369–424 (REQRQTDNEEDDGRGAGPDKAEPAQQPAPLLRPPNEDANGADDDGDGGEQKPPNVQ) form a disordered region.

This sequence belongs to the FBXO31 family. Part of a SCF (SKP1-cullin-F-box) protein ligase complex SCF(FBXO31).

The protein resides in the cytoplasm. The protein operates within protein modification; protein ubiquitination. Substrate-recognition component of the SCF(FBXO31) protein ligase complex, which specifically mediates the ubiquitination of proteins amidated at their C-terminus in response to oxidative stress, leading to their degradation by the proteasome. Fbxo31 specifically recognizes and binds C-terminal peptides bearing an amide: C-terminal amidation in response to oxidative stress takes place following protein fragmentation. The SCF(FBXO31) also plays a role in G1 arrest following DNA damage by mediating ubiquitination of phosphorylated cyclin-D1 (ccnd1), promoting its degradation by the proteasome, resulting in G1 arrest. The SCF(FBXO31) complex is however not a major regulator of ccnd1 stability during the G1/S transition. This chain is F-box only protein 31-A (fbxo31-a), found in Xenopus laevis (African clawed frog).